The sequence spans 72 residues: Translation initiation factor IF-1 (72 aa).

The 72-residue stretch at 1 to 72 (MAKEENIEMQ…SKGRIIFRAR (72 aa)) folds into the S1-like domain.

It belongs to the IF-1 family. Component of the 30S ribosomal translation pre-initiation complex which assembles on the 30S ribosome in the order IF-2 and IF-3, IF-1 and N-formylmethionyl-tRNA(fMet); mRNA recruitment can occur at any time during PIC assembly.

Its subcellular location is the cytoplasm. Functionally, one of the essential components for the initiation of protein synthesis. Stabilizes the binding of IF-2 and IF-3 on the 30S subunit to which N-formylmethionyl-tRNA(fMet) subsequently binds. Helps modulate mRNA selection, yielding the 30S pre-initiation complex (PIC). Upon addition of the 50S ribosomal subunit IF-1, IF-2 and IF-3 are released leaving the mature 70S translation initiation complex. The sequence is that of Translation initiation factor IF-1 from Colwellia psychrerythraea (strain 34H / ATCC BAA-681) (Vibrio psychroerythus).